A 173-amino-acid chain; its full sequence is Co-chaperone protein HscB homolog (173 aa).

Positions 5–77 (CHFAQFDLQP…PRRALYLLTL (73 aa)) constitute a J domain.

It belongs to the HscB family. Interacts with HscA and stimulates its ATPase activity.

In terms of biological role, co-chaperone involved in the maturation of iron-sulfur cluster-containing proteins. Seems to help targeting proteins to be folded toward HscA. This is Co-chaperone protein HscB homolog from Pseudomonas paraeruginosa (strain DSM 24068 / PA7) (Pseudomonas aeruginosa (strain PA7)).